The chain runs to 360 residues: Josephin-like protein (360 aa).

Positions 5–192 (ESKIYHERQR…NQLPLASNYR (188 aa)) constitute a Josephin domain. The active-site Nucleophile is the cysteine 18. Histidine 129 acts as the Proton acceptor in catalysis.

It carries out the reaction Thiol-dependent hydrolysis of ester, thioester, amide, peptide and isopeptide bonds formed by the C-terminal Gly of ubiquitin (a 76-residue protein attached to proteins as an intracellular targeting signal).. Functionally, may act as a deubiquitinating enzyme. In Arabidopsis thaliana (Mouse-ear cress), this protein is Josephin-like protein.